Consider the following 278-residue polypeptide: MLCLTRLRANVNKVAFMEMVKDLRFRTEAPIAECGAALKETHGDVEKAMEVLRKKGAARAMKKRSRVTEHGSVVACVGGLFGAAVITVCSETDFAARSAQFQNTCARVKVALQRKIIDSKGDVLTNPTEAHRSLVEATAEDIRSSIAVLGENVTIKSVESLRLAPHVAEHISIGSYTHGSLDVPDVGRIAGVVAVSRLDPTKEVQASTLTDVARHFVASSGAEGNYAHQNFFGTEETVGQWLKRHGLCFSSSLVVDFGKEPITHTASQPRNAVKHPEG.

The protein belongs to the EF-Ts family.

The protein resides in the mitochondrion. Its function is as follows. Associates with the EF-Tu.GDP complex and induces the exchange of GDP to GTP. It remains bound to the aminoacyl-tRNA.EF-Tu.GTP complex up to the GTP hydrolysis stage on the ribosome. The protein is Elongation factor Ts 1, mitochondrial of Trypanosoma cruzi (strain CL Brener).